A 415-amino-acid polypeptide reads, in one-letter code: uncharacterized protein (415 aa).

Residues 1 to 55 form the TRAM domain; sequence MSTGTVTIDRLGAQGDGVARTEAGPVFAPFTLPGETVSLAVNKANGTLISLKEAS. [4Fe-4S] cluster is bound by residues cysteine 63, cysteine 75, cysteine 78, and cysteine 152. 4 residues coordinate S-adenosyl-L-methionine: glutamine 252, phenylalanine 279, glutamate 299, and aspartate 347. Residue cysteine 373 is the Nucleophile of the active site.

The protein belongs to the class I-like SAM-binding methyltransferase superfamily. RNA M5U methyltransferase family.

This is an uncharacterized protein from Rhizobium meliloti (strain 1021) (Ensifer meliloti).